Here is a 113-residue protein sequence, read N- to C-terminus: Nucleoid-associated protein ROP_41370 (113 aa).

Belongs to the YbaB/EbfC family. Homodimer.

It is found in the cytoplasm. It localises to the nucleoid. Functionally, binds to DNA and alters its conformation. May be involved in regulation of gene expression, nucleoid organization and DNA protection. The polypeptide is Nucleoid-associated protein ROP_41370 (Rhodococcus opacus (strain B4)).